Consider the following 118-residue polypeptide: Large ribosomal subunit protein uL18 (118 aa).

Belongs to the universal ribosomal protein uL18 family. Part of the 50S ribosomal subunit; part of the 5S rRNA/L5/L18/L25 subcomplex. Contacts the 5S and 23S rRNAs.

In terms of biological role, this is one of the proteins that bind and probably mediate the attachment of the 5S RNA into the large ribosomal subunit, where it forms part of the central protuberance. The chain is Large ribosomal subunit protein uL18 from Campylobacter jejuni subsp. jejuni serotype O:6 (strain 81116 / NCTC 11828).